A 64-amino-acid chain; its full sequence is Large ribosomal subunit protein bL35 (64 aa).

This sequence belongs to the bacterial ribosomal protein bL35 family.

The chain is Large ribosomal subunit protein bL35 from Levilactobacillus brevis (strain ATCC 367 / BCRC 12310 / CIP 105137 / JCM 1170 / LMG 11437 / NCIMB 947 / NCTC 947) (Lactobacillus brevis).